Consider the following 336-residue polypeptide: Glucokinase (336 aa).

ATP is bound at residue 12 to 17 (ADIGGT).

It belongs to the bacterial glucokinase family.

It localises to the cytoplasm. It carries out the reaction D-glucose + ATP = D-glucose 6-phosphate + ADP + H(+). This Helicobacter pylori (strain J99 / ATCC 700824) (Campylobacter pylori J99) protein is Glucokinase.